Consider the following 263-residue polypeptide: Glutamate 5-kinase (263 aa).

Position 15 (lysine 15) interacts with ATP. Substrate contacts are provided by serine 55, aspartate 142, and asparagine 154. ATP-binding positions include 174–175 (SD) and 216–222 (TGGIETK).

The protein belongs to the glutamate 5-kinase family.

Its subcellular location is the cytoplasm. It catalyses the reaction L-glutamate + ATP = L-glutamyl 5-phosphate + ADP. It functions in the pathway amino-acid biosynthesis; L-proline biosynthesis; L-glutamate 5-semialdehyde from L-glutamate: step 1/2. Catalyzes the transfer of a phosphate group to glutamate to form L-glutamate 5-phosphate. The chain is Glutamate 5-kinase from Alkaliphilus oremlandii (strain OhILAs) (Clostridium oremlandii (strain OhILAs)).